Reading from the N-terminus, the 325-residue chain is Putative carboxypeptidase YocD (325 aa).

The active-site Nucleophile is the Ser-111. Catalysis depends on charge relay system residues Glu-228 and His-296.

The protein belongs to the peptidase S66 family.

This is Putative carboxypeptidase YocD (yocD) from Bacillus subtilis (strain 168).